The primary structure comprises 142 residues: gSG7 salivary protein (142 aa).

An N-terminal signal peptide occupies residues 1–25 (METKLVLALIACGVICLLQTTPTEA). 2 cysteine pairs are disulfide-bonded: cysteine 83/cysteine 138 and cysteine 106/cysteine 116.

As to quaternary structure, interacts with host coagulation factor XII (F12) (inactive and activated). Interacts with host high molecular weight kininogen (KNG1) (inactive and activated).

The protein localises to the secreted. Zn(2+) modulates binding to host coagulation factor XII (F12) and high molecular weight kininogen (KNG1). Its function is as follows. Salivary protein with anticoagulant activity. Inhibits activation of host kallikrein-kinin system by preventing the reciprocal activation of coagulation factor XII (F12) and prekallikrein (KLKB1), and subsequent release of bradykinin. Inhibits host factor XII and high molecular weight kininogen (KNG1) binding to negatively charged surfaces. Weakly inhibits the alternative pathway of complement system activation in the host. The sequence is that of gSG7 salivary protein from Anopheles stephensi (Indo-Pakistan malaria mosquito).